The primary structure comprises 102 residues: Small ribosomal subunit protein uS10 (102 aa).

This sequence belongs to the universal ribosomal protein uS10 family. As to quaternary structure, part of the 30S ribosomal subunit.

Involved in the binding of tRNA to the ribosomes. This is Small ribosomal subunit protein uS10 from Nocardioides sp. (strain ATCC BAA-499 / JS614).